A 401-amino-acid chain; its full sequence is uncharacterized protein (401 aa).

7 helical membrane passes run Leu44–Ile64, Leu69–Leu89, Leu99–Phe119, Ile130–Pro150, Phe201–Leu221, Ile246–Ala266, and Leu286–Val306.

It is found in the cell membrane. This is an uncharacterized protein from Mycoplasma pneumoniae (strain ATCC 29342 / M129 / Subtype 1) (Mycoplasmoides pneumoniae).